Here is a 198-residue protein sequence, read N- to C-terminus: Na(+)-translocating NADH-quinone reductase subunit E (198 aa).

6 consecutive transmembrane segments (helical) span residues 11-31 (AVFV…FLAV), 35-55 (VSTA…SVPV), 77-97 (FLNF…LEMI), 110-130 (GIFL…SFMV), 140-160 (VVYG…MAGI), and 176-196 (LGIT…FSGV).

Belongs to the NqrDE/RnfAE family. In terms of assembly, composed of six subunits; NqrA, NqrB, NqrC, NqrD, NqrE and NqrF.

The protein localises to the cell inner membrane. It carries out the reaction a ubiquinone + n Na(+)(in) + NADH + H(+) = a ubiquinol + n Na(+)(out) + NAD(+). Functionally, NQR complex catalyzes the reduction of ubiquinone-1 to ubiquinol by two successive reactions, coupled with the transport of Na(+) ions from the cytoplasm to the periplasm. NqrA to NqrE are probably involved in the second step, the conversion of ubisemiquinone to ubiquinol. In Serratia proteamaculans (strain 568), this protein is Na(+)-translocating NADH-quinone reductase subunit E.